We begin with the raw amino-acid sequence, 305 residues long: Sulfate adenylyltransferase subunit 2 (305 aa).

This sequence belongs to the PAPS reductase family. CysD subfamily. In terms of assembly, heterodimer composed of CysD, the smaller subunit, and CysN.

It catalyses the reaction sulfate + ATP + H(+) = adenosine 5'-phosphosulfate + diphosphate. It participates in sulfur metabolism; hydrogen sulfide biosynthesis; sulfite from sulfate: step 1/3. In terms of biological role, with CysN forms the ATP sulfurylase (ATPS) that catalyzes the adenylation of sulfate producing adenosine 5'-phosphosulfate (APS) and diphosphate, the first enzymatic step in sulfur assimilation pathway. APS synthesis involves the formation of a high-energy phosphoric-sulfuric acid anhydride bond driven by GTP hydrolysis by CysN coupled to ATP hydrolysis by CysD. The protein is Sulfate adenylyltransferase subunit 2 of Pseudomonas aeruginosa (strain LESB58).